A 397-amino-acid chain; its full sequence is S-adenosylmethionine:tRNA ribosyltransferase-isomerase (397 aa).

The protein belongs to the QueA family. As to quaternary structure, monomer.

It is found in the cytoplasm. It carries out the reaction 7-aminomethyl-7-carbaguanosine(34) in tRNA + S-adenosyl-L-methionine = epoxyqueuosine(34) in tRNA + adenine + L-methionine + 2 H(+). It functions in the pathway tRNA modification; tRNA-queuosine biosynthesis. In terms of biological role, transfers and isomerizes the ribose moiety from AdoMet to the 7-aminomethyl group of 7-deazaguanine (preQ1-tRNA) to give epoxyqueuosine (oQ-tRNA). This is S-adenosylmethionine:tRNA ribosyltransferase-isomerase from Nostoc sp. (strain PCC 7120 / SAG 25.82 / UTEX 2576).